Consider the following 268-residue polypeptide: Interferon alpha/beta receptor 2 (268 aa).

The N-terminal stretch at 1-16 is a signal peptide; it reads MGPWTLLLLHLPLVVS. Over 17–223 the chain is Extracellular; the sequence is MLPAPTNVSI…TSPTAANTVP (207 aa). 2 consecutive Fibronectin type-III domains span residues 18 to 114 and 115 to 217; these read LPAP…LTDT and LLGP…TSPT. 2 disulfides stabilise this stretch: C65/C74 and C191/C211. The chain crosses the membrane as a helical span at residues 224 to 244; it reads VVLSVLCAFSLLVVLLCGIVV. Topologically, residues 245–268 are cytoplasmic; the sequence is YSGRLLCMHKPLPKTLSSVPLCGG.

This sequence belongs to the type II cytokine receptor family. Heterodimer with IFNAR1; forming the receptor for type I interferon.

It is found in the cell membrane. The protein resides in the cytoplasm. Together with IFNAR1, forms the heterodimeric receptor for type I interferons (including interferons alpha, beta, epsilon, omega and kappa). Type I interferon binding activates the JAK-STAT signaling cascade, resulting in transcriptional activation or repression of interferon-regulated genes that encode the effectors of the interferon response. Mechanistically, type I interferon-binding brings the IFNAR1 and IFNAR2 subunits into close proximity with one another, driving their associated Janus kinases (JAKs) (TYK2 bound to IFNAR1 and JAK1 bound to IFNAR2) to cross-phosphorylate one another. The activated kinases phosphorylate specific tyrosine residues on the intracellular domains of IFNAR1 and IFNAR2, forming docking sites for the STAT transcription factors (STAT1, STAT2 and STAT). STAT proteins are then phosphorylated by the JAKs, promoting their translocation into the nucleus to regulate expression of interferon-regulated genes. The chain is Interferon alpha/beta receptor 2 from Oncorhynchus mykiss (Rainbow trout).